The chain runs to 80 residues: RNA-binding protein Hfq (80 aa).

In terms of domain architecture, Sm spans 10 to 70 (DIFLNNARKE…ISTVSPAKPI (61 aa)).

This sequence belongs to the Hfq family. In terms of assembly, homohexamer.

In terms of biological role, RNA chaperone that binds small regulatory RNA (sRNAs) and mRNAs to facilitate mRNA translational regulation in response to envelope stress, environmental stress and changes in metabolite concentrations. Also binds with high specificity to tRNAs. The chain is RNA-binding protein Hfq from Clostridium perfringens (strain SM101 / Type A).